The sequence spans 139 residues: Large ribosomal subunit protein bL17 (139 aa).

The tract at residues 120 to 139 (EDAKGRDSGPTQDNSEAEAA) is disordered.

Part of the 50S ribosomal subunit. Contacts protein L32. Post-translationally, may be methylated thrice, on undetermined residues.

This is Large ribosomal subunit protein bL17 from Rhodopseudomonas palustris (strain ATCC BAA-98 / CGA009).